A 183-amino-acid chain; its full sequence is Putative lipoprotein LpqE (183 aa).

The signal sequence occupies residues Met1–Gly30. Residue Cys31 is the site of N-palmitoyl cysteine attachment. The S-diacylglycerol cysteine moiety is linked to residue Cys31.

It localises to the cell membrane. The polypeptide is Putative lipoprotein LpqE (lpqE) (Mycobacterium leprae (strain TN)).